We begin with the raw amino-acid sequence, 156 residues long: Lipoprotein signal peptidase (156 aa).

4 helical membrane passes run 8–28, 39–59, 67–87, and 99–119; these read IYIN…KWIL, VFFI…SILS, YFLL…MIKF, and SLIL…GFVI. Residues aspartate 120 and aspartate 138 contribute to the active site. Residues 129-149 traverse the membrane as a helical segment; the sequence is WHFATFNIADFSIFIGMIMII.

The protein belongs to the peptidase A8 family.

It is found in the cell inner membrane. It catalyses the reaction Release of signal peptides from bacterial membrane prolipoproteins. Hydrolyzes -Xaa-Yaa-Zaa-|-(S,diacylglyceryl)Cys-, in which Xaa is hydrophobic (preferably Leu), and Yaa (Ala or Ser) and Zaa (Gly or Ala) have small, neutral side chains.. It participates in protein modification; lipoprotein biosynthesis (signal peptide cleavage). Its function is as follows. This protein specifically catalyzes the removal of signal peptides from prolipoproteins. This Buchnera aphidicola subsp. Schizaphis graminum (strain Sg) protein is Lipoprotein signal peptidase.